The primary structure comprises 140 residues: Transmembrane protein 107 (140 aa).

The next 2 membrane-spanning stretches (helical) occupy residues 7–27 and 53–73; these read LVPS…TLFW and LVAA…GFLS. Residue Asn-79 is glycosylated (N-linked (GlcNAc...) asparagine). The next 2 helical transmembrane spans lie at 83–103 and 113–133; these read SLIS…FIFE and IFVF…VTVF.

Part of the tectonic-like complex (also named B9 complex). Interacts with TMEM237, TMEM231, MKS1 and TMEM216.

It localises to the membrane. The protein resides in the cell projection. It is found in the cilium. Plays a role in cilia formation and embryonic patterning. Requires for normal Sonic hedgehog (Shh) signaling in the neural tube and acts in combination with GLI2 and GLI3 to pattern ventral and intermediate neuronal cell types. During ciliogenesis regulates the ciliary transition zone localization of some MKS complex proteins. This chain is Transmembrane protein 107, found in Homo sapiens (Human).